Reading from the N-terminus, the 217-residue chain is Peptide methionine sulfoxide reductase MsrA (217 aa).

Residues 16–39 are disordered; sequence EALKGGRHPVLESPQPHTVLGTPI. C56 is a catalytic residue.

This sequence belongs to the MsrA Met sulfoxide reductase family.

It carries out the reaction L-methionyl-[protein] + [thioredoxin]-disulfide + H2O = L-methionyl-(S)-S-oxide-[protein] + [thioredoxin]-dithiol. It catalyses the reaction [thioredoxin]-disulfide + L-methionine + H2O = L-methionine (S)-S-oxide + [thioredoxin]-dithiol. In terms of biological role, has an important function as a repair enzyme for proteins that have been inactivated by oxidation. Catalyzes the reversible oxidation-reduction of methionine sulfoxide in proteins to methionine. The sequence is that of Peptide methionine sulfoxide reductase MsrA from Corynebacterium efficiens (strain DSM 44549 / YS-314 / AJ 12310 / JCM 11189 / NBRC 100395).